A 110-amino-acid chain; its full sequence is UPF0122 protein YlxM (110 aa).

It belongs to the UPF0122 family.

Its function is as follows. Might take part in the signal recognition particle (SRP) pathway. This is inferred from the conservation of its genetic proximity to ftsY/ffh. May be a regulatory protein. The sequence is that of UPF0122 protein YlxM (ylxM) from Bacillus subtilis (strain 168).